The following is a 349-amino-acid chain: MSFHPQTPQSPSHFSPSSSDQSTSMSGSIVSTTTTLPTPAHSVNGSSLANDMSFTDIVMGENSPQKRKRTSDDVGDREQKKVHIEDRKLGIDDLHLDVGEKYLLCRSQHQPPRPHLSEDLFEMYGLADLAAEYARIKDGQKNALRKTYKGHIKKLGVQGHFDSVKTDEKDPERLEYLMGCPQEEWNAHFVRGKEITRGLSSDMKSKISRAVTMSRGAVPSTLWNNSVLGDIAASSMKAHLNQPPSARPTAPNTPLAYGGPAMQRVKPQTPGFQDNRPRRNIKKRGYGDSSFEGYGEGFEDDGGLETGYSTGEGDMASGLKRRKKAQPGTQSYAQARQQSSYGHHGVSGI.

The segment covering 1–28 (MSFHPQTPQSPSHFSPSSSDQSTSMSGS) has biased composition (low complexity). Disordered stretches follow at residues 1–81 (MSFH…EQKK) and 238–349 (AHLN…VSGI). The span at 29–53 (IVSTTTTLPTPAHSVNGSSLANDMS) shows a compositional bias: polar residues. Basic and acidic residues predominate over residues 70-81 (TSDDVGDREQKK). The span at 330-341 (QSYAQARQQSSY) shows a compositional bias: low complexity.

This sequence belongs to the Mediator complex subunit 19 family. As to quaternary structure, component of the Mediator complex.

It localises to the nucleus. Component of the Mediator complex, a coactivator involved in the regulated transcription of nearly all RNA polymerase II-dependent genes. Mediator functions as a bridge to convey information from gene-specific regulatory proteins to the basal RNA polymerase II transcription machinery. Mediator is recruited to promoters by direct interactions with regulatory proteins and serves as a scaffold for the assembly of a functional preinitiation complex with RNA polymerase II and the general transcription factors. The chain is Mediator of RNA polymerase II transcription subunit 19 (rox3) from Neurospora crassa (strain ATCC 24698 / 74-OR23-1A / CBS 708.71 / DSM 1257 / FGSC 987).